The following is a 262-amino-acid chain: Thiazole synthase (262 aa).

The active-site Schiff-base intermediate with DXP is the Lys96. 1-deoxy-D-xylulose 5-phosphate is bound by residues Gly157, 184–185 (AG), and 206–207 (NT).

It belongs to the ThiG family. Homotetramer. Forms heterodimers with either ThiH or ThiS.

The protein resides in the cytoplasm. It catalyses the reaction [ThiS sulfur-carrier protein]-C-terminal-Gly-aminoethanethioate + 2-iminoacetate + 1-deoxy-D-xylulose 5-phosphate = [ThiS sulfur-carrier protein]-C-terminal Gly-Gly + 2-[(2R,5Z)-2-carboxy-4-methylthiazol-5(2H)-ylidene]ethyl phosphate + 2 H2O + H(+). The protein operates within cofactor biosynthesis; thiamine diphosphate biosynthesis. Functionally, catalyzes the rearrangement of 1-deoxy-D-xylulose 5-phosphate (DXP) to produce the thiazole phosphate moiety of thiamine. Sulfur is provided by the thiocarboxylate moiety of the carrier protein ThiS. In vitro, sulfur can be provided by H(2)S. The chain is Thiazole synthase from Legionella pneumophila (strain Paris).